We begin with the raw amino-acid sequence, 214 residues long: Large ribosomal subunit protein uL3 (214 aa).

Residues 133 to 153 (GRATHGNSRSHNVPGSIGMAQ) are disordered. Gln153 carries the N5-methylglutamine modification.

The protein belongs to the universal ribosomal protein uL3 family. Part of the 50S ribosomal subunit. Forms a cluster with proteins L14 and L19. Post-translationally, methylated by PrmB.

Functionally, one of the primary rRNA binding proteins, it binds directly near the 3'-end of the 23S rRNA, where it nucleates assembly of the 50S subunit. This chain is Large ribosomal subunit protein uL3, found in Cupriavidus metallidurans (strain ATCC 43123 / DSM 2839 / NBRC 102507 / CH34) (Ralstonia metallidurans).